The sequence spans 120 residues: Small ribosomal subunit protein uS13 (120 aa).

The segment at 94-120 is disordered; the sequence is GLPLRGQRTRTNARTRKGPRKAIAGKK.

The protein belongs to the universal ribosomal protein uS13 family. Part of the 30S ribosomal subunit. Forms a loose heterodimer with protein S19. Forms two bridges to the 50S subunit in the 70S ribosome.

Its function is as follows. Located at the top of the head of the 30S subunit, it contacts several helices of the 16S rRNA. In the 70S ribosome it contacts the 23S rRNA (bridge B1a) and protein L5 of the 50S subunit (bridge B1b), connecting the 2 subunits; these bridges are implicated in subunit movement. Contacts the tRNAs in the A and P-sites. This chain is Small ribosomal subunit protein uS13, found in Aromatoleum aromaticum (strain DSM 19018 / LMG 30748 / EbN1) (Azoarcus sp. (strain EbN1)).